The following is a 421-amino-acid chain: Serine--tRNA ligase (421 aa).

227–229 (TSE) serves as a coordination point for L-serine. ATP contacts are provided by residues 257–259 (RRE) and Val273. Position 280 (Glu280) interacts with L-serine. Position 344–347 (344–347 (ELTS)) interacts with ATP. Position 379 (Thr379) interacts with L-serine.

Belongs to the class-II aminoacyl-tRNA synthetase family. Type-1 seryl-tRNA synthetase subfamily. Homodimer. The tRNA molecule binds across the dimer.

The protein localises to the cytoplasm. It catalyses the reaction tRNA(Ser) + L-serine + ATP = L-seryl-tRNA(Ser) + AMP + diphosphate + H(+). The enzyme catalyses tRNA(Sec) + L-serine + ATP = L-seryl-tRNA(Sec) + AMP + diphosphate + H(+). It functions in the pathway aminoacyl-tRNA biosynthesis; selenocysteinyl-tRNA(Sec) biosynthesis; L-seryl-tRNA(Sec) from L-serine and tRNA(Sec): step 1/1. In terms of biological role, catalyzes the attachment of serine to tRNA(Ser). Is also able to aminoacylate tRNA(Sec) with serine, to form the misacylated tRNA L-seryl-tRNA(Sec), which will be further converted into selenocysteinyl-tRNA(Sec). This chain is Serine--tRNA ligase, found in Leifsonia xyli subsp. xyli (strain CTCB07).